A 548-amino-acid polypeptide reads, in one-letter code: Folylpolyglutamate synthase (548 aa).

An ATP-binding site is contributed by 130–133; the sequence is GKGS. Mg(2+) is bound by residues Ser157, Glu234, and His262. 2 residues coordinate ATP: Arg382 and Asp396.

This sequence belongs to the folylpolyglutamate synthase family. It depends on a monovalent cation as a cofactor.

The protein localises to the mitochondrion inner membrane. It localises to the mitochondrion matrix. It is found in the cytoplasm. The catalysed reaction is (6S)-5,6,7,8-tetrahydrofolyl-(gamma-L-Glu)(n) + L-glutamate + ATP = (6S)-5,6,7,8-tetrahydrofolyl-(gamma-L-Glu)(n+1) + ADP + phosphate + H(+). It participates in cofactor biosynthesis; tetrahydrofolylpolyglutamate biosynthesis. Its function is as follows. Catalyzes conversion of folates to polyglutamate derivatives allowing concentration of folate compounds in the cell and the intracellular retention of these cofactors, which are important substrates for most of the folate-dependent enzymes that are involved in one-carbon transfer reactions involved in purine, pyrimidine and amino acid synthesis. Required for methionine synthesis and maintenance of intact mitochondrial DNA. Involved in telomere maintenance. The chain is Folylpolyglutamate synthase from Saccharomyces cerevisiae (strain AWRI1631) (Baker's yeast).